A 549-amino-acid chain; its full sequence is MARDATKLEATVAKLKKHWAESAPRDMRAAFSADPGRFGRYSLCLDDLLFDWSKCRVNDETMALLKELAVAADVEGRRAAMFAGEHINNTEDRAVLHVALRDTSSKEVLVDGHNVLPDVKHVLDRMAAFADGIRSGALKGATGRKITDIVNIGIGGSDLGPVMATLALAPYHDGPRAHFVSNIDGAHIADTLSPLDPASTLIIVASKTFTTIETMTNAQTARKWVADTLGEAAVGAHFAAVSTALDKVAAFGIPEDRVFGFWDWVGGRYSVWSAIGLPVMIAVGPDNFRKFLAGAHAMDVHFRDAPLEKNLPVMLGLIGYWHRAICGYGSRAIIPYDQRLSRLPAYLQQLDMESNGKSVTLDGKPVSGPTGPVVWGEPGTNGQHAFFQLLHQGTDTIPLEFIVAAKGHEPTLDHQHEMLMANCLAQSEALMKGRTLDEARAQLQAKNLPASQVERIAPHRVFSGNRPSLTLIHDMLDPYALGRLIALYEHRVFVEAQIFGINAFDQWGVELGKELATELLPVVSGKEGASGRDASTQGLVAHLHARRKA.

Residue glutamate 353 is the Proton donor of the active site. Active-site residues include histidine 384 and lysine 513.

The protein belongs to the GPI family.

It is found in the cytoplasm. The enzyme catalyses alpha-D-glucose 6-phosphate = beta-D-fructose 6-phosphate. It functions in the pathway carbohydrate biosynthesis; gluconeogenesis. The protein operates within carbohydrate degradation; glycolysis; D-glyceraldehyde 3-phosphate and glycerone phosphate from D-glucose: step 2/4. Its function is as follows. Catalyzes the reversible isomerization of glucose-6-phosphate to fructose-6-phosphate. The sequence is that of Glucose-6-phosphate isomerase from Brucella canis (strain ATCC 23365 / NCTC 10854 / RM-666).